Reading from the N-terminus, the 357-residue chain is Eukaryotic translation initiation factor 3 subunit F (357 aa).

Residues 1–82 (MATPAVPVSA…PAPALPGPAL (82 aa)) form a disordered region. Ala2 carries the N-acetylalanine modification. The span at 9–36 (SAPPATPTPVPAAAPASVPAPTPAPAAA) shows a compositional bias: pro residues. The segment covering 37-74 (PVPAAAPASSSDPAAAAAATAAPGQTPASAQAPAQTPA) has biased composition (low complexity). At Ser46 the chain carries Phosphoserine; by CDK11; in vitro. An MPN domain is found at 92-222 (VRLHPVILAS…IKAYVSTLMG (131 aa)). The residue at position 238 (Lys238) is an N6-acetyllysine. The residue at position 258 (Ser258) is a Phosphoserine.

This sequence belongs to the eIF-3 subunit F family. As to quaternary structure, component of the eukaryotic translation initiation factor 3 (eIF-3) complex, which is composed of 13 subunits: EIF3A, EIF3B, EIF3C, EIF3D, EIF3E, EIF3F, EIF3G, EIF3H, EIF3I, EIF3J, EIF3K, EIF3L and EIF3M. The eIF-3 complex appears to include 3 stable modules: module A is composed of EIF3A, EIF3B, EIF3G and EIF3I; module B is composed of EIF3F, EIF3H, and EIF3M; and module C is composed of EIF3C, EIF3D, EIF3E, EIF3K and EIF3L. EIF3C of module C binds EIF3B of module A and EIF3H of module B, thereby linking the three modules. EIF3J is a labile subunit that binds to the eIF-3 complex via EIF3B. The eIF-3 complex interacts with RPS6KB1 under conditions of nutrient depletion. Mitogenic stimulation leads to binding and activation of a complex composed of MTOR and RPTOR, leading to phosphorylation and release of RPS6KB1 and binding of EIF4B to eIF-3. Interacts with RNF139; the interaction leads to protein translation inhibitions in a ubiquitination-dependent manner. Interacts with DTX1, the interaction is required for deubiquitinating activity towards NOTCH1. Post-translationally, phosphorylation is enhanced upon serum stimulation. Phosphorylated during apoptosis by caspase-processed CDK11.

The protein localises to the cytoplasm. It carries out the reaction Thiol-dependent hydrolysis of ester, thioester, amide, peptide and isopeptide bonds formed by the C-terminal Gly of ubiquitin (a 76-residue protein attached to proteins as an intracellular targeting signal).. Its function is as follows. Component of the eukaryotic translation initiation factor 3 (eIF-3) complex, which is required for several steps in the initiation of protein synthesis. The eIF-3 complex associates with the 40S ribosome and facilitates the recruitment of eIF-1, eIF-1A, eIF-2:GTP:methionyl-tRNAi and eIF-5 to form the 43S pre-initiation complex (43S PIC). The eIF-3 complex stimulates mRNA recruitment to the 43S PIC and scanning of the mRNA for AUG recognition. The eIF-3 complex is also required for disassembly and recycling of post-termination ribosomal complexes and subsequently prevents premature joining of the 40S and 60S ribosomal subunits prior to initiation. The eIF-3 complex specifically targets and initiates translation of a subset of mRNAs involved in cell proliferation, including cell cycling, differentiation and apoptosis, and uses different modes of RNA stem-loop binding to exert either translational activation or repression. Deubiquitinates activated NOTCH1, promoting its nuclear import, thereby acting as a positive regulator of Notch signaling. The chain is Eukaryotic translation initiation factor 3 subunit F from Homo sapiens (Human).